Consider the following 79-residue polypeptide: Ubiquinol-cytochrome c reductase complex assembly factor 5 (79 aa).

The Mitochondrial matrix segment spans residues 1-20 (MSPYSGSVRRLLDSWPGKKR). A helical membrane pass occupies residues 21-43 (FGVYRFLPLFFLLGAGLEFSMIN). Over 44–79 (WTVGETNFYRTFKRRQAKNYVEEQQHLQARAANNTN) the chain is Mitochondrial intermembrane.

This sequence belongs to the UQCC5 family. Interacts with respiratory complex III components Uqcc1 and RFeSP; the interactions are probably involved in the assembly and stability of the mitochondrial ubiquinol-cytochrome c reductase complex. Interacts with sloth2; the interaction stabilizes both components. Expressed in the brain.

It is found in the mitochondrion inner membrane. The protein localises to the mitochondrion. Required for the assembly and stability of the mitochondrial ubiquinol-cytochrome c reductase complex (complex III (CIII) or cytochrome b-c1 complex), a multisubunit transmembrane complex that is part of the mitochondrial electron transport chain (ETC) which drives oxidative phosphorylation. The sequence is that of Ubiquinol-cytochrome c reductase complex assembly factor 5 from Drosophila melanogaster (Fruit fly).